The following is a 60-amino-acid chain: Large ribosomal subunit protein bL32 (60 aa).

The protein belongs to the bacterial ribosomal protein bL32 family.

The polypeptide is Large ribosomal subunit protein bL32 (Synechococcus sp. (strain JA-3-3Ab) (Cyanobacteria bacterium Yellowstone A-Prime)).